The primary structure comprises 1141 residues: Membrane-associated protein gex-3 (1141 aa).

Belongs to the HEM-1/HEM-2 family. Interacts with aco-1, gei-13 and gex-2. Interacts with gex-3. As to expression, expressed in neurons.

The protein localises to the cytoplasm. Rac effector required for tissue morphogenesis, cell migrations and egg laying. May play a role in egg laying and in yolk protein clatherin-mediated endocytosis by oocytes during oogenesis. Plays a role in the formation of gap junctions between EA and EP endodermal precursor cells in embryos. The protein is Membrane-associated protein gex-3 of Caenorhabditis elegans.